A 179-amino-acid polypeptide reads, in one-letter code: Putative 5'(3')-deoxyribonucleotidase (179 aa).

The active-site Nucleophile is Asp9. Residues Asp9, Asp11, and Asp135 each contribute to the Mg(2+) site. Asp11 functions as the Proton donor in the catalytic mechanism.

The protein belongs to the 5'(3')-deoxyribonucleotidase family. Requires Mg(2+) as cofactor.

Dephosphorylates the 5' and 2'(3')-phosphates of deoxyribonucleotides. The chain is Putative 5'(3')-deoxyribonucleotidase from Staphylococcus epidermidis (strain ATCC 35984 / DSM 28319 / BCRC 17069 / CCUG 31568 / BM 3577 / RP62A).